The following is a 120-amino-acid chain: NAD(P)H-quinone oxidoreductase subunit 3, chloroplastic (120 aa).

The next 3 helical transmembrane spans lie at 9 to 29 (IFWA…TISG), 64 to 84 (MFAL…PWAM), and 88 to 108 (VLGI…IVGS).

It belongs to the complex I subunit 3 family. As to quaternary structure, NDH is composed of at least 16 different subunits, 5 of which are encoded in the nucleus.

The protein resides in the plastid. Its subcellular location is the chloroplast thylakoid membrane. The enzyme catalyses a plastoquinone + NADH + (n+1) H(+)(in) = a plastoquinol + NAD(+) + n H(+)(out). It catalyses the reaction a plastoquinone + NADPH + (n+1) H(+)(in) = a plastoquinol + NADP(+) + n H(+)(out). In terms of biological role, NDH shuttles electrons from NAD(P)H:plastoquinone, via FMN and iron-sulfur (Fe-S) centers, to quinones in the photosynthetic chain and possibly in a chloroplast respiratory chain. The immediate electron acceptor for the enzyme in this species is believed to be plastoquinone. Couples the redox reaction to proton translocation, and thus conserves the redox energy in a proton gradient. The polypeptide is NAD(P)H-quinone oxidoreductase subunit 3, chloroplastic (Lotus japonicus (Lotus corniculatus var. japonicus)).